The primary structure comprises 691 residues: Elongation factor G (691 aa).

One can recognise a tr-type G domain in the interval 8-283; it reads DMQRNIGIMA…AVVDFLPSPV (276 aa). GTP-binding positions include 17 to 24, 81 to 85, and 135 to 138; these read AHIDAGKT, DTPGH, and NKMD.

It belongs to the TRAFAC class translation factor GTPase superfamily. Classic translation factor GTPase family. EF-G/EF-2 subfamily.

The protein resides in the cytoplasm. Functionally, catalyzes the GTP-dependent ribosomal translocation step during translation elongation. During this step, the ribosome changes from the pre-translocational (PRE) to the post-translocational (POST) state as the newly formed A-site-bound peptidyl-tRNA and P-site-bound deacylated tRNA move to the P and E sites, respectively. Catalyzes the coordinated movement of the two tRNA molecules, the mRNA and conformational changes in the ribosome. The sequence is that of Elongation factor G from Nitratidesulfovibrio vulgaris (strain ATCC 29579 / DSM 644 / CCUG 34227 / NCIMB 8303 / VKM B-1760 / Hildenborough) (Desulfovibrio vulgaris).